Here is a 530-residue protein sequence, read N- to C-terminus: MAAYQQEEQMQLPRADAIRSRLIDTFSLIEHLQGLSQAVPRHTIRELLDPSRQKKLVLGDQHQLVRFSIKPQRIEQISHAQRLLSRLHVRCSQRPPLSLWAGWVLECPLFKNFIIFLVFLNTIILMVEIELLESTNTKLWPLKLTLEVAAWFILLIFILEILLKWLSNFSVFWKSAWNVFDFVVTMLSLLPEVVVLVGVTGQSVWLQLLRICRVLRSLKLLAQFRQIQIIILVLVRALKSMTFLLMLLLIFFYIFAVTGVYVFSEYTRSPRQDLEYHVFFSDLPNSLVTVFILFTLDHWYALLQDVWKVPEVSRIFSSIYFILWLLLGSIIFRSIIVAMMVTNFQNIRKELNEEMARREVQLKADMFKRQIIQRRKNMSHEALTSSHSKIEDSSRGASQQRESLDLSEVSEVESNYGATEEDLITSASKTEETLSKKREYQSSSCVSSTSSSYSSSSESRFSESIGRLDWETLVHENLPGLMEMDQDDRVWPRDSLFRYFELLEKLQYNLEERKKLQEFAVQALMNLEDK.

Residues 1 to 108 (MAAYQQEEQM…LWAGWVLECP (108 aa)) lie on the Cytoplasmic side of the membrane. Residues 109 to 131 (LFKNFIIFLVFLNTIILMVEIEL) traverse the membrane as a helical segment. Over 132–140 (LESTNTKLW) the chain is Extracellular. The chain crosses the membrane as a helical span at residues 141 to 166 (PLKLTLEVAAWFILLIFILEILLKWL). Topologically, residues 167–175 (SNFSVFWKS) are cytoplasmic. A helical transmembrane segment spans residues 176–200 (AWNVFDFVVTMLSLLPEVVVLVGVT). The Extracellular portion of the chain corresponds to 201–203 (GQS). Residues 204-222 (VWLQLLRICRVLRSLKLLA) traverse the membrane as a helical segment. Residues 223 to 239 (QFRQIQIIILVLVRALK) are Cytoplasmic-facing. The chain crosses the membrane as a helical span at residues 240–262 (SMTFLLMLLLIFFYIFAVTGVYV). The Extracellular segment spans residues 263-281 (FSEYTRSPRQDLEYHVFFS). The helical; Pore-forming intramembrane region spans 282–294 (DLPNSLVTVFILF). Over 295–314 (TLDHWYALLQDVWKVPEVSR) the chain is Extracellular. The helical transmembrane segment at 315–341 (IFSSIYFILWLLLGSIIFRSIIVAMMV) threads the bilayer. The Cytoplasmic segment spans residues 342-530 (TNFQNIRKEL…VQALMNLEDK (189 aa)). Positions 378–458 (MSHEALTSSH…TSSSYSSSSE (81 aa)) are disordered. Residues 429 to 440 (KTEETLSKKREY) show a composition bias toward basic and acidic residues. Low complexity predominate over residues 442–458 (SSSCVSSTSSSYSSSSE).

The protein belongs to the cation channel sperm-associated (TC 1.A.1.19) family. As to quaternary structure, component of the CatSper complex or CatSpermasome composed of the core pore-forming members CATSPER1, CATSPER2, CATSPER3 and CATSPER4 as well as auxiliary members CATSPERB, CATSPERG, CATSPERD, CATSPERE, CATSPERZ, C2CD6/CATSPERT, TMEM249, TMEM262 and EFCAB9. HSPA1 may be an additional auxiliary complex member. The core complex members CATSPER1, CATSPER2, CATSPER3 and CATSPER4 form a heterotetrameric channel. The auxiliary CATSPERB, CATSPERG, CATSPERD and CATSPERE subunits form a pavilion-like structure over the pore which stabilizes the complex through interactions with CATSPER4, CATSPER3, CATSPER1 and CATSPER2 respectively. TMEM262/CATSPERH interacts with CATSPERB, further stabilizing the complex. C2CD6/CATSPERT interacts at least with CATSPERD and is required for targeting the CatSper complex in the flagellar membrane. Interacts with Ca(v)3.3/CACNA1I, leading to suppression of T-type calcium channel activity. As to expression, testis-specific.

The protein resides in the cell projection. Its subcellular location is the cilium. It localises to the flagellum membrane. The catalysed reaction is Ca(2+)(in) = Ca(2+)(out). The CatSper calcium channel is indirectly activated by extracellular progesterone and prostaglandins following the sequence: progesterone &gt; PGF1-alpha = PGE1 &gt; PGA1 &gt; PGE2 &gt;&gt; PGD2. The CatSper calcium channel is directly inhibited by endocannabinoid 2-arachidonoylglycerol (2AG). Indirect activation by progesterone takes place via the following mechanism: progesterone binds and activates the acylglycerol lipase ABHD2, which in turn mediates hydrolysis of 2AG inhibitor, relieving inhibition of the CatSper channel. The primary effect of progesterone activation is to shift voltage dependence towards more physiological, negative membrane potentials; it is not mediated by metabotropic receptors and second messengers. Sperm capacitation enhances the effect of progesterone by providing additional negative shift. Also activated by the elevation of intracellular pH. Functionally, pore-forming subunit of the CatSper complex, a sperm-specific voltage-gated calcium channel, that plays a central role in calcium-dependent physiological responses essential for successful fertilization, such as sperm hyperactivation, acrosome reaction and chemotaxis towards the oocyte. The sequence is that of Cation channel sperm-associated protein 2 (CATSPER2) from Homo sapiens (Human).